The primary structure comprises 493 residues: Ribose import ATP-binding protein RbsA (493 aa).

2 ABC transporter domains span residues 5–241 and 252–491; these read LKIS…VGRR and EKGE…AAAI. 37–44 lines the ATP pocket; that stretch reads GENGAGKS.

It belongs to the ABC transporter superfamily. Ribose importer (TC 3.A.1.2.1) family. In terms of assembly, the complex is composed of an ATP-binding protein (RbsA), two transmembrane proteins (RbsC) and a solute-binding protein (RbsB).

Its subcellular location is the cell inner membrane. The enzyme catalyses D-ribose(out) + ATP + H2O = D-ribose(in) + ADP + phosphate + H(+). Functionally, part of the ABC transporter complex RbsABC involved in ribose import. Responsible for energy coupling to the transport system. This is Ribose import ATP-binding protein RbsA from Haemophilus influenzae (strain ATCC 51907 / DSM 11121 / KW20 / Rd).